Here is a 234-residue protein sequence, read N- to C-terminus: Endonuclease V (234 aa).

Positions 36 and 104 each coordinate Mg(2+).

This sequence belongs to the endonuclease V family. The cofactor is Mg(2+).

The protein localises to the cytoplasm. The enzyme catalyses Endonucleolytic cleavage at apurinic or apyrimidinic sites to products with a 5'-phosphate.. DNA repair enzyme involved in the repair of deaminated bases. Selectively cleaves double-stranded DNA at the second phosphodiester bond 3' to a deoxyinosine leaving behind the intact lesion on the nicked DNA. The polypeptide is Endonuclease V (Yersinia enterocolitica serotype O:8 / biotype 1B (strain NCTC 13174 / 8081)).